Consider the following 177-residue polypeptide: Phycoerythrin beta subunit (177 aa).

Y18, K28, N35, and D39 together coordinate (2R,3E)-phycoerythrobilin. 15,16-dihydrobiliverdin is bound by residues C50, D54, and C61. (2R,3E)-phycoerythrobilin-binding residues include C82, R84, and D85. Residue R129 participates in 15,16-dihydrobiliverdin binding. (2R,3E)-phycoerythrobilin is bound at residue N144. 15,16-dihydrobiliverdin contacts are provided by Q148 and K149. (2R,3E)-phycoerythrobilin contacts are provided by P154, G156, and C158.

This sequence belongs to the phycobiliprotein family. As to quaternary structure, heterotetramer of 2 different alpha chains and 2 identical beta chains which form 2 alpha-beta heterodimers within the heterotetramer. The two alpha-beta heterodimers are rotated to an open configuration in contrast to the closed configuration found in other cryptophyte species due to the insertion of a single amino acid, 'Asp-65', in a conserved region of the alpha chain. In the open form, the central chromophores are not in physical contact but are separated by a water-filled channel. In terms of processing, contains three phycoerythrobilin chromophores and one 15,16-dihydrobiliverdin chromophore with binding of the phycoerythrobilin chromophores mediated by both the alpha and beta subunits.

It localises to the plastid. Its subcellular location is the chloroplast thylakoid membrane. Functionally, light-harvesting photosynthetic bile pigment-protein from the phycobiliprotein complex. This is Phycoerythrin beta subunit from Hemiselmis andersenii (Cryptophyte alga).